The following is a 413-amino-acid chain: Serine hydroxymethyltransferase (413 aa).

(6S)-5,6,7,8-tetrahydrofolate-binding positions include Leu-119 and 123 to 125 (GHL). The residue at position 228 (Lys-228) is an N6-(pyridoxal phosphate)lysine. 351 to 353 (SPF) serves as a coordination point for (6S)-5,6,7,8-tetrahydrofolate.

It belongs to the SHMT family. Homodimer. It depends on pyridoxal 5'-phosphate as a cofactor.

Its subcellular location is the cytoplasm. It catalyses the reaction (6R)-5,10-methylene-5,6,7,8-tetrahydrofolate + glycine + H2O = (6S)-5,6,7,8-tetrahydrofolate + L-serine. The protein operates within one-carbon metabolism; tetrahydrofolate interconversion. Its pathway is amino-acid biosynthesis; glycine biosynthesis; glycine from L-serine: step 1/1. In terms of biological role, catalyzes the reversible interconversion of serine and glycine with tetrahydrofolate (THF) serving as the one-carbon carrier. This reaction serves as the major source of one-carbon groups required for the biosynthesis of purines, thymidylate, methionine, and other important biomolecules. Also exhibits THF-independent aldolase activity toward beta-hydroxyamino acids, producing glycine and aldehydes, via a retro-aldol mechanism. This Clostridium botulinum (strain Okra / Type B1) protein is Serine hydroxymethyltransferase.